Reading from the N-terminus, the 396-residue chain is Glycerate kinase (396 aa).

The protein belongs to the glycerate kinase type-2 family.

The protein resides in the cytoplasm. It carries out the reaction (R)-glycerate + ATP = (2R)-3-phosphoglycerate + ADP + H(+). The protein is Glycerate kinase (GLYCTK) of Macaca fascicularis (Crab-eating macaque).